Reading from the N-terminus, the 150-residue chain is MKYQQLENLESGWKWKYLVKKHREGELITRYVEASAAKEAVDLLLTLENEPVRVNAWIEEHMNPALLNRMKQTIRARRKRHFNAEHQHTRKKSIDLEFIVWQRLAGLAQRRGKTLSETIVQLIEDAEHKEKYASKMSTLKQDLQALLGKE.

It belongs to the MatP family. Homodimer.

It localises to the cytoplasm. Required for spatial organization of the terminus region of the chromosome (Ter macrodomain) during the cell cycle. Prevents early segregation of duplicated Ter macrodomains during cell division. Binds specifically to matS, which is a 13 bp signature motif repeated within the Ter macrodomain. The sequence is that of Macrodomain Ter protein from Citrobacter koseri (strain ATCC BAA-895 / CDC 4225-83 / SGSC4696).